A 298-amino-acid chain; its full sequence is Sulfofructose kinase (298 aa).

5 residues coordinate 6-deoxy-6-sulfo-D-fructose: D13, K27, G39, S95, and R138. T212, G214, G217, and G243 together coordinate ATP. D244 contacts 6-deoxy-6-sulfo-D-fructose.

Belongs to the carbohydrate kinase PfkB family. Homodimer.

It catalyses the reaction 6-deoxy-6-sulfo-D-fructose + ATP = 6-deoxy-6-sulfo-D-fructose 1-phosphate + ADP + H(+). With respect to regulation, strongly inhibited by ADP. Activated by sulfoquinovose (SQ), sulfolactaldehyde (SLA) and dihydroxyacetone phosphate (DHAP) (through effects on KM) and by fructose 6-phosphate (F6P), fructose bisphosphate (FBP), phosphoenolpyruvate (PEP) and citrate (through effects on kcat/KM). Phosphorylates 6-deoxy-6-sulfo-D-fructose (SF) to 6-deoxy-6-sulfo-D-fructose 1-phosphate (SFP). Cannot phosphorylate fructose 6-phosphate. In Escherichia coli (strain K12), this protein is Sulfofructose kinase (yihV).